A 132-amino-acid polypeptide reads, in one-letter code: Photosystem II extrinsic protein U (132 aa).

Positions 1 to 29 are cleaved as a signal peptide; that stretch reads MKRLLSWLTGALVMAGLLSSLVLPSAVYA.

The protein belongs to the PsbU family. PSII is composed of 1 copy each of membrane proteins PsbA, PsbB, PsbC, PsbD, PsbE, PsbF, PsbH, PsbI, PsbJ, PsbK, PsbL, PsbM, PsbT, PsbX, PsbY, PsbZ, Psb30/Ycf12, peripheral proteins PsbO, CyanoQ (PsbQ), PsbU, PsbV and a large number of cofactors. It forms dimeric complexes.

The protein resides in the cellular thylakoid membrane. Its function is as follows. One of the extrinsic, lumenal subunits of photosystem II (PSII). PSII is a light-driven water plastoquinone oxidoreductase, using light energy to abstract electrons from H(2)O, generating a proton gradient subsequently used for ATP formation. The extrinsic proteins stabilize the structure of photosystem II oxygen-evolving complex (OEC), the ion environment of oxygen evolution and protect the OEC against heat-induced inactivation. The polypeptide is Photosystem II extrinsic protein U (Synechococcus sp. (strain CC9902)).